Here is a 181-residue protein sequence, read N- to C-terminus: Major urinary protein (181 aa).

An N-terminal signal peptide occupies residues Met1–Ala19. Residue Asn54 is glycosylated (N-linked (GlcNAc...) asparagine). The cysteines at positions 83 and 176 are disulfide-linked.

Belongs to the calycin superfamily. Lipocalin family. As to expression, abundant in the urine of adult male rats but absent from that of females.

It is found in the cytoplasm. The protein localises to the cytosol. It localises to the secreted. In terms of biological role, major urinary proteins (Mups) bind and release pheromones. They may also protect pheromones from oxidation. In this context, they play a role in the regulation of social behaviors, such as aggression, mating, pup-suckling, territory establishment and dominance. Acts as a kairomone, detected by the prey vomeronasal organ and inducing fear reactions in mice. This Rattus norvegicus (Rat) protein is Major urinary protein.